Reading from the N-terminus, the 176-residue chain is Replication restart protein PriC (176 aa).

Belongs to the PriC family. Component of the replication restart primosome, which is composed of PriA, PriB, PriC, DnaB and DnaT; DnaG primase associates transiently with this complex. Interacts with the C-terminus of SSB; this interaction is required to load the main replicative helicase onto substrate replication forks. Interacts with helicase DnaB alone and in the DnaB-DnaC complex, probably 1:1 binding with DnaB. Interacts with DnaT.

In terms of biological role, involved in the restart of stalled replication forks, which reloads the DnaB replicative helicase on sites other than the origin of replication. Recognizes abandoned replication forks and remodels DNA single-stranded binding protein (SSB) on ssDNA to uncover a loading site for DnaB. There are several restart pathways, the PriA-PriC pathway is a minor restart pathway. Part of the minor PriC-Rep pathway for restart of stalled replication forks, which has a different substrate specificity than PriA. Part of the major restart pathway with PriA, PriB, DnaB, DnaT and DnaG primase. priB and priC have redundant roles in the cell. Binds 7-9 nucleotides of single-stranded (ss)DNA. The chain is Replication restart protein PriC from Klebsiella pneumoniae subsp. pneumoniae (strain ATCC 700721 / MGH 78578).